We begin with the raw amino-acid sequence, 321 residues long: Isopenicillin N synthase (321 aa).

Residues 1-42 are disordered; that stretch reads MPVLMPSADVPTIDISPQLFGTDPTPRRTSRGRSTRPARGSG. Isopenicillin N contacts are provided by R87, Y91, and Y188. The N-[(5S)-5-amino-5-carboxypentanoyl]-L-cysteinyl-D-valine site is built by R87, Y91, Y188, H213, and D215. The Fe2OG dioxygenase domain maps to 179–287; that stretch reads TLSAVSMIRY…RLSLPFFLHA (109 aa). Residues H213, D215, and H269 each coordinate Fe(2+). R278 is a binding site for 2-oxoglutarate. Residue S280 participates in isopenicillin N binding. N-[(5S)-5-amino-5-carboxypentanoyl]-L-cysteinyl-D-valine is bound at residue S280.

This sequence belongs to the iron/ascorbate-dependent oxidoreductase family. The cofactor is Fe cation. L-ascorbate is required as a cofactor.

The enzyme catalyses N-[(5S)-5-amino-5-carboxypentanoyl]-L-cysteinyl-D-valine + O2 = isopenicillin N + 2 H2O. The protein operates within antibiotic biosynthesis; penicillin G biosynthesis; penicillin G from L-alpha-aminoadipate and L-cysteine and L-valine: step 2/3. Its function is as follows. Removes, in the presence of oxygen, 4 hydrogen atoms from delta-L-(alpha-aminoadipyl)-L-cysteinyl-D-valine (ACV) to form the azetidinone and thiazolidine rings of isopenicillin. This chain is Isopenicillin N synthase (pcbC), found in Streptantibioticus cattleyicolor (Streptomyces cattleya).